A 389-amino-acid chain; its full sequence is Large ribosomal subunit protein uL3 (389 aa).

A disordered region spans residues 1-36 (MSHRKFEHPRHGSLGFLPRKRSSRHRGKVKSFPKDD). Basic residues predominate over residues 18–31 (PRKRSSRHRGKVKS).

The protein belongs to the universal ribosomal protein uL3 family.

The protein localises to the cytoplasm. In terms of biological role, the L3 protein is a component of the large subunit of cytoplasmic ribosomes. The polypeptide is Large ribosomal subunit protein uL3 (RPL3) (Oryza sativa subsp. japonica (Rice)).